Here is an 804-residue protein sequence, read N- to C-terminus: Phenylalanine--tRNA ligase beta subunit (804 aa).

In terms of domain architecture, tRNA-binding spans 38 to 148 (RSYLKGFVIA…EDVPIGASFA (111 aa)). The 76-residue stretch at 401 to 476 (PEIRQITFPL…RIYGLDKIKP (76 aa)) folds into the B5 domain. Positions 454, 460, 463, and 464 each coordinate Mg(2+). One can recognise an FDX-ACB domain in the interval 710 to 803 (SSLQMVRRDF…VTRMTGASLR (94 aa)).

Belongs to the phenylalanyl-tRNA synthetase beta subunit family. Type 1 subfamily. As to quaternary structure, tetramer of two alpha and two beta subunits. It depends on Mg(2+) as a cofactor.

It localises to the cytoplasm. The enzyme catalyses tRNA(Phe) + L-phenylalanine + ATP = L-phenylalanyl-tRNA(Phe) + AMP + diphosphate + H(+). The protein is Phenylalanine--tRNA ligase beta subunit of Bartonella henselae (strain ATCC 49882 / DSM 28221 / CCUG 30454 / Houston 1) (Rochalimaea henselae).